Here is a 642-residue protein sequence, read N- to C-terminus: MPVITLPDGSQRSFDKPVSVYEVAASIGPGLAKATLGGRVNGQRVDAHDLISEDANLVIFTPKDDDGLEIIRHSCAHLLGHAIKQLYPDVKMAIGPTIDNGFYYDVDLEHKLTDEDIAALEARMLELAKTEYDVVKKKVSWQEAHAVFAARGESYKLEILERDIPQSDQPGLYHHEEYIDMCRGPHVPNMRFCLNFKLMRVSGAYWRGDSNNKMLQRIYGTAFADAKQLKAYLNLLEEAAKRDHRKLAKKFDLFHLQDEAPGMVFWHPKGWTLWQQIEQYMRAKQNDWGYQEVRTPLIMDRVLWEKSGHWENYRENMFTTESEKRDFAVKPMNCPGHVQIFNHGLRSHKDLPLRLAEFGSCHRNEASGALHGIMRVRGFVQDDAHIFCTEDQVVAEVAAFNQMLKSVYDDFGFTDIAVKLSLRPEKYAGSLETWNKAEEGLRTALRAAGLEWEELPGEGAFYGPKIEYQIKDALGRSWQCGTIQLDYVLPERLDAEYVADDNVRKRPVMLHRAILGSFERFLGILIEHYEGSFPVWLSPVQVVVANITDSQAEYVKRVEKALREQGIRVIADLRNEKIGFKIREHTIQRVPYLLVVGDKEVENQSLAVRTRDGKDLGVMPLDAFIAHLTADIARRGRVFSAE.

The TGS domain maps to 1–61; that stretch reads MPVITLPDGS…SEDANLVIFT (61 aa). Residues 243–534 form a catalytic region; that stretch reads DHRKLAKKFD…LIEHYEGSFP (292 aa). Positions 334, 385, and 511 each coordinate Zn(2+).

Belongs to the class-II aminoacyl-tRNA synthetase family. In terms of assembly, homodimer. Zn(2+) serves as cofactor.

It is found in the cytoplasm. The catalysed reaction is tRNA(Thr) + L-threonine + ATP = L-threonyl-tRNA(Thr) + AMP + diphosphate + H(+). Its function is as follows. Catalyzes the attachment of threonine to tRNA(Thr) in a two-step reaction: L-threonine is first activated by ATP to form Thr-AMP and then transferred to the acceptor end of tRNA(Thr). Also edits incorrectly charged L-seryl-tRNA(Thr). This Cellvibrio japonicus (strain Ueda107) (Pseudomonas fluorescens subsp. cellulosa) protein is Threonine--tRNA ligase.